Consider the following 432-residue polypeptide: Enolase (432 aa).

Q167 serves as a coordination point for (2R)-2-phosphoglycerate. Catalysis depends on E209, which acts as the Proton donor. Residues D246, E291, and D318 each contribute to the Mg(2+) site. (2R)-2-phosphoglycerate-binding residues include K343, R372, S373, and K394. K343 functions as the Proton acceptor in the catalytic mechanism.

Belongs to the enolase family. In terms of assembly, component of the RNA degradosome, a multiprotein complex involved in RNA processing and mRNA degradation. Mg(2+) serves as cofactor.

It localises to the cytoplasm. The protein resides in the secreted. The protein localises to the cell surface. It carries out the reaction (2R)-2-phosphoglycerate = phosphoenolpyruvate + H2O. The protein operates within carbohydrate degradation; glycolysis; pyruvate from D-glyceraldehyde 3-phosphate: step 4/5. In terms of biological role, catalyzes the reversible conversion of 2-phosphoglycerate (2-PG) into phosphoenolpyruvate (PEP). It is essential for the degradation of carbohydrates via glycolysis. The sequence is that of Enolase from Aliivibrio fischeri (strain MJ11) (Vibrio fischeri).